The following is a 236-amino-acid chain: H2HPP isomerase (236 aa).

Cupin type-2 domains are found at residues 40 to 106 (YVPP…AIDI) and 151 to 215 (NIPG…SKSV). Residues histidine 50, histidine 52, glutamine 56, histidine 91, histidine 162, histidine 164, glutamine 168, and histidine 202 each contribute to the a divalent metal cation site. Tyrosine 223 is a binding site for substrate.

As to quaternary structure, monomer. Fe(2+) is required as a cofactor. It depends on Co(2+) as a cofactor.

It localises to the cytoplasm. It catalyses the reaction 3-[(4R)-4-hydroxycyclohexa-1,5-dien-1-yl]-2-oxopropanoate = 3-[(1E,4R)-4-hydroxycyclohex-2-en-1-ylidene]pyruvate. It participates in antibiotic biosynthesis; bacilysin biosynthesis. Its function is as follows. Part of the bacABCDEF operon responsible for the biosynthesis of the nonribosomally synthesized dipeptide antibiotic bacilysin, composed of L-alanine and L-anticapsin. Bacilysin is an irreversible inactivator of the glutaminase domain of glucosamine synthetase. BacB catalyzes the allylic isomerization of the endocyclic-delta(4),delta(8)-7R-dihydro-hydroxyphenylpyruvate (en-H2HPP) to generate a mixture of 3E,7R- and 3Z, 7R-olefins of the exocyclic-delta(3),delta(5)-dihydro-hydroxyphenylpyruvate (ex-H2HPP). The polypeptide is H2HPP isomerase (Bacillus amyloliquefaciens (Bacillus velezensis)).